The primary structure comprises 198 residues: NAD(P)H dehydrogenase (quinone) (198 aa).

The region spanning 4 to 189 (VLVLYYSMYG…SIARYQGEYV (186 aa)) is the Flavodoxin-like domain. FMN-binding positions include 10–15 (SMYGHI) and 78–80 (TRF). Position 12 (Tyr-12) interacts with NAD(+). Residue Trp-98 coordinates substrate. FMN is bound by residues 113–118 (STGTGG) and His-133.

Belongs to the WrbA family. It depends on FMN as a cofactor.

The enzyme catalyses a quinone + NADH + H(+) = a quinol + NAD(+). It catalyses the reaction a quinone + NADPH + H(+) = a quinol + NADP(+). In Shigella dysenteriae serotype 1 (strain Sd197), this protein is NAD(P)H dehydrogenase (quinone).